The following is a 486-amino-acid chain: Cardiolipin synthase A (486 aa).

The next 2 membrane-spanning stretches (helical) occupy residues 3-23 (TFYTVVNWLVILGYWLLIAGV) and 38-58 (MAWLLIIYILPLVGIIAYLSF). PLD phosphodiesterase domains lie at 219–246 (MDLRQHRKMVMIDNYIAYTGSMNMVDPR) and 399–426 (EGGLLHTKSVLVDGELSLVGTVNLDMRS). Residues His-224, Lys-226, Asp-231, His-404, Lys-406, and Asp-411 contribute to the active site.

This sequence belongs to the phospholipase D family. Cardiolipin synthase subfamily. ClsA sub-subfamily.

It localises to the cell inner membrane. It catalyses the reaction 2 a 1,2-diacyl-sn-glycero-3-phospho-(1'-sn-glycerol) = a cardiolipin + glycerol. Functionally, catalyzes the reversible phosphatidyl group transfer from one phosphatidylglycerol molecule to another to form cardiolipin (CL) (diphosphatidylglycerol) and glycerol. The polypeptide is Cardiolipin synthase A (Klebsiella pneumoniae (strain 342)).